A 683-amino-acid chain; its full sequence is Leucine zipper putative tumor suppressor 2 homolog (683 aa).

3 disordered regions span residues 1–37 (MAAL…TMGS), 82–107 (YSSQ…NNGN), and 262–320 (MGHI…CDRS). 2 stretches are compositionally biased toward polar residues: residues 11-37 (IDQN…TMGS) and 96-107 (KPSTTTSGNNGN). The segment covering 290–308 (SDSGRSSSSKSTGSLSGRG) has biased composition (low complexity). Residues 324–665 (SDEILIRELE…LELEARELDE (342 aa)) adopt a coiled-coil conformation.

This sequence belongs to the LZTS2 family.

Its subcellular location is the cytoplasm. The protein resides in the cytoskeleton. It localises to the microtubule organizing center. It is found in the centrosome. In terms of biological role, negative regulator of katanin-mediated microtubule severing and release from the centrosome. Required for central spindle formation and the completion of cytokinesis. Negative regulator of the Wnt signaling pathway. Represses beta-catenin-mediated transcriptional activation by promoting the nuclear exclusion of beta-catenin. The protein is Leucine zipper putative tumor suppressor 2 homolog (lzts2) of Xenopus tropicalis (Western clawed frog).